Reading from the N-terminus, the 225-residue chain is Transmembrane protein 40 (225 aa).

Met-1 is subject to N-acetylmethionine. The segment covering 1-14 has biased composition (low complexity); sequence MEASGSSSQSQDSG. The interval 1–96 is disordered; that stretch reads MEASGSSSQS…RRDSLRGADH (96 aa). Positions 15-29 are enriched in basic and acidic residues; it reads GVHRETEDHYQETEL. The segment covering 30–39 has biased composition (basic residues); the sequence is HKHHGKARER. Positions 46 to 68 are enriched in low complexity; sequence SSSSSSSSSSSSSSSSSSSSSSD. Residues 78–87 are compositionally biased toward basic residues; sequence GPRKHRRRPR. Ser-129 is subject to Phosphoserine. A run of 2 helical transmembrane segments spans residues 152 to 172 and 179 to 199; these read FFHF…YHYY and LGVG…FGLV.

It localises to the membrane. The sequence is that of Transmembrane protein 40 (Tmem40) from Mus musculus (Mouse).